A 225-amino-acid polypeptide reads, in one-letter code: Probable glutathione S-transferase (225 aa).

The region spanning 6–85 (EDVKLLGIVG…YIDETWKNNP (80 aa)) is the GST N-terminal domain. Residues S16, K43, V57, and 69–70 (ES) contribute to the glutathione site. Residues 90–214 (DPYQRALARF…PPRDPLFAYF (125 aa)) enclose the GST C-terminal domain.

This sequence belongs to the GST superfamily. HSP26 family.

The enzyme catalyses RX + glutathione = an S-substituted glutathione + a halide anion + H(+). May play a role in the cellular response to stress. In Glycine max (Soybean), this protein is Probable glutathione S-transferase (HSP26-A).